Here is a 244-residue protein sequence, read N- to C-terminus: 23S rRNA (guanosine-2'-O-)-methyltransferase RlmB (244 aa).

3 residues coordinate S-adenosyl-L-methionine: Gly-196, Ile-216, and Leu-225.

The protein belongs to the class IV-like SAM-binding methyltransferase superfamily. RNA methyltransferase TrmH family. RlmB subfamily. Homodimer.

The protein localises to the cytoplasm. It carries out the reaction guanosine(2251) in 23S rRNA + S-adenosyl-L-methionine = 2'-O-methylguanosine(2251) in 23S rRNA + S-adenosyl-L-homocysteine + H(+). Functionally, specifically methylates the ribose of guanosine 2251 in 23S rRNA. This Photorhabdus laumondii subsp. laumondii (strain DSM 15139 / CIP 105565 / TT01) (Photorhabdus luminescens subsp. laumondii) protein is 23S rRNA (guanosine-2'-O-)-methyltransferase RlmB.